A 92-amino-acid chain; its full sequence is Large ribosomal subunit protein bL28 (92 aa).

It belongs to the bacterial ribosomal protein bL28 family.

In Borrelia duttonii (strain Ly), this protein is Large ribosomal subunit protein bL28.